The chain runs to 90 residues: U7-theraphotoxin-Hhn1c (90 aa).

Residues 1-19 (MKTAIFTVVLALAVFAVLS) form the signal peptide. Positions 20 to 50 (FGWEANEKALSEEFTELIHEKEAASETEARE) are excised as a propeptide. 3 disulfides stabilise this stretch: cysteine 51–cysteine 65, cysteine 58–cysteine 70, and cysteine 64–cysteine 81.

This sequence belongs to the neurotoxin 10 (Hwtx-1) family. 13 (Hntx-13) subfamily. As to expression, expressed by the venom gland.

The protein resides in the secreted. Functionally, ion channel inhibitor. The polypeptide is U7-theraphotoxin-Hhn1c (Cyriopagopus hainanus (Chinese bird spider)).